A 955-amino-acid chain; its full sequence is 26S proteasome non-ATPase regulatory subunit 1 (955 aa).

A disordered region spans residues 279 to 313; that stretch reads PGSTNTGTVPGSEKDSDAMEAEEKPGSTCVGKSAE. The span at 290–303 shows a compositional bias: basic and acidic residues; sequence SEKDSDAMEAEEKP. PC repeat units follow at residues 403–436, 441–474, 476–510, 511–545, 547–580, 581–616, 617–649, 651–685, 686–726, and 729–761; these read TATA…PGSA, GGLY…DIVR, GGSL…VTGE, AAGL…EKIL, GLAV…ILRR, SGMY…DVRR, AAVE…PHVR, GAAM…YVRQ, GALI…DVMA, and GAIL…PSVV. Disordered stretches follow at residues 839 to 879 and 932 to 955; these read AKKK…NFQL and AHGP…YIDD. 2 stretches are compositionally biased toward basic and acidic residues: residues 842-854 and 861-874; these read KEKE…KEEE and TEKK…KEPE. Over residues 938 to 955 the composition is skewed to acidic residues; sequence EEEEQEPEPPEPFEYIDD.

It belongs to the proteasome subunit S1 family. Component of the 19S proteasome regulatory particle complex. The 26S proteasome consists of a 20S core particle (CP) and two 19S regulatory subunits (RP). The regulatory particle is made of a lid composed of 9 subunits, a base containing 6 ATPases and few additional components including PSMD1. Interacts with ADRM1.

Its function is as follows. Component of the 26S proteasome, a multiprotein complex involved in the ATP-dependent degradation of ubiquitinated proteins. This complex plays a key role in the maintenance of protein homeostasis by removing misfolded or damaged proteins, which could impair cellular functions, and by removing proteins whose functions are no longer required. Therefore, the proteasome participates in numerous cellular processes, including cell cycle progression, apoptosis, or DNA damage repair. The protein is 26S proteasome non-ATPase regulatory subunit 1 (PSMD1) of Gallus gallus (Chicken).